Consider the following 949-residue polypeptide: Autophagy-related protein 9 (949 aa).

The disordered stretch occupies residues 1–197 (MMTSNILSRF…GVKWSLGQPN (197 aa)). At 1–232 (MMTSNILSRF…EVYSYFLGNG (232 aa)) the chain is on the cytoplasmic side. 3 stretches are compositionally biased toward basic and acidic residues: residues 35 to 57 (VEERAGLTLEDGHGGHYTDHELQ), 75 to 85 (FLARESHHRVP), and 129 to 139 (EGHHDDEDLKS). The helical transmembrane segment at 233–253 (IWSILLTRVLSLLTFAFVVGF) threads the bilayer. Over 254 to 289 (STFLTNCVNYHKVRGSKTLDDILVDRCTTKMSLSST) the chain is Lumenal. The chain crosses the membrane as a helical span at residues 290–310 (FLLWLLTFFWIGKAFQCLLGI). The Cytoplasmic segment spans residues 311-431 (RRLKHMHDFY…NLCIMDYVFN (121 aa)). Residues 432 to 477 (EQGQVRTLFLKDTHRKALSEGLRRRFIFAGFMNIFVAPFIVVYFMM) lie within the membrane without spanning it. Residues 478–542 (HYFFRYFNEY…DQFPKDKTVQ (65 aa)) are Cytoplasmic-facing. Residues 543-563 (VAGFVAFVSGALASVLALASV) traverse the membrane as a helical segment. At 564–578 (VDPELFLGFEITHDR) the chain is on the lumenal side. A helical membrane pass occupies residues 579–599 (TVLFYLGVFGSVWAVARGMVP). The Cytoplasmic portion of the chain corresponds to 600-645 (EETNVFDPEYALLEVINYTHYFPSQWKGRLHSDEVRREFAELYQMK). Residues 646-666 (IVIFLEEILSMIFTPFILWFS) lie within the membrane without spanning it. Topologically, residues 667–949 (LPRCSDRLID…DGRGRTAVGL (283 aa)) are cytoplasmic. The disordered stretch occupies residues 748–919 (GAHPSTKRQF…DAGAGGENAD (172 aa)).

This sequence belongs to the ATG9 family. In terms of assembly, homotrimer; forms a homotrimer with a central pore that forms a path between the two membrane leaflets. In terms of processing, phosphorylated by atg1. Atg1 phosphorylation is required for preautophagosome elongation.

It is found in the preautophagosomal structure membrane. It localises to the cytoplasmic vesicle membrane. The protein localises to the golgi apparatus membrane. The protein resides in the endoplasmic reticulum membrane. It carries out the reaction a 1,2-diacyl-sn-glycero-3-phosphocholine(in) = a 1,2-diacyl-sn-glycero-3-phosphocholine(out). It catalyses the reaction a 1,2-diacyl-sn-glycero-3-phospho-L-serine(in) = a 1,2-diacyl-sn-glycero-3-phospho-L-serine(out). The catalysed reaction is a 1,2-diacyl-sn-glycero-3-phosphoethanolamine(in) = a 1,2-diacyl-sn-glycero-3-phosphoethanolamine(out). The enzyme catalyses a 1,2-diacyl-sn-glycero-3-phospho-(1D-myo-inositol-3-phosphate)(in) = a 1,2-diacyl-sn-glycero-3-phospho-(1D-myo-inositol-3-phosphate)(out). Phospholipid scramblase involved in autophagy and cytoplasm to vacuole transport (Cvt) vesicle formation. Cycles between the preautophagosomal structure/phagophore assembly site (PAS) and the cytoplasmic vesicle pool and supplies membrane for the growing autophagosome. Lipid scramblase activity plays a key role in preautophagosomal structure/phagophore assembly by distributing the phospholipids that arrive through atg2 from the cytoplasmic to the luminal leaflet of the bilayer, thereby driving autophagosomal membrane expansion. Required for mitophagy. Also involved in endoplasmic reticulum-specific autophagic process and is essential for the survival of cells subjected to severe ER stress. Different machineries are required for anterograde trafficking to the PAS during either the Cvt pathway or bulk autophagy and for retrograde trafficking. This is Autophagy-related protein 9 (atg9) from Aspergillus clavatus (strain ATCC 1007 / CBS 513.65 / DSM 816 / NCTC 3887 / NRRL 1 / QM 1276 / 107).